The sequence spans 116 residues: Large ribosomal subunit protein bL19 (116 aa).

This sequence belongs to the bacterial ribosomal protein bL19 family.

Its function is as follows. This protein is located at the 30S-50S ribosomal subunit interface and may play a role in the structure and function of the aminoacyl-tRNA binding site. The polypeptide is Large ribosomal subunit protein bL19 (Flavobacterium johnsoniae (strain ATCC 17061 / DSM 2064 / JCM 8514 / BCRC 14874 / CCUG 350202 / NBRC 14942 / NCIMB 11054 / UW101) (Cytophaga johnsonae)).